The following is a 385-amino-acid chain: Dual-specificity RNA methyltransferase RlmN (385 aa).

Glu113 serves as the catalytic Proton acceptor. The region spanning 120–352 (VGRAGALCVS…NRAGYASPIR (233 aa)) is the Radical SAM core domain. Cys127 and Cys363 form a disulfide bridge. [4Fe-4S] cluster-binding residues include Cys134, Cys138, and Cys141. S-adenosyl-L-methionine-binding positions include 189–190 (GE), Ser221, 243–245 (SLH), and Asn320. Cys363 functions as the S-methylcysteine intermediate in the catalytic mechanism.

This sequence belongs to the radical SAM superfamily. RlmN family. [4Fe-4S] cluster serves as cofactor.

It is found in the cytoplasm. The catalysed reaction is adenosine(2503) in 23S rRNA + 2 reduced [2Fe-2S]-[ferredoxin] + 2 S-adenosyl-L-methionine = 2-methyladenosine(2503) in 23S rRNA + 5'-deoxyadenosine + L-methionine + 2 oxidized [2Fe-2S]-[ferredoxin] + S-adenosyl-L-homocysteine. The enzyme catalyses adenosine(37) in tRNA + 2 reduced [2Fe-2S]-[ferredoxin] + 2 S-adenosyl-L-methionine = 2-methyladenosine(37) in tRNA + 5'-deoxyadenosine + L-methionine + 2 oxidized [2Fe-2S]-[ferredoxin] + S-adenosyl-L-homocysteine. Specifically methylates position 2 of adenine 2503 in 23S rRNA and position 2 of adenine 37 in tRNAs. m2A2503 modification seems to play a crucial role in the proofreading step occurring at the peptidyl transferase center and thus would serve to optimize ribosomal fidelity. The protein is Dual-specificity RNA methyltransferase RlmN of Phenylobacterium zucineum (strain HLK1).